The chain runs to 49 residues: Large ribosomal subunit protein bL33 (49 aa).

The protein belongs to the bacterial ribosomal protein bL33 family.

The chain is Large ribosomal subunit protein bL33 from Thermosipho melanesiensis (strain DSM 12029 / CIP 104789 / BI429).